The chain runs to 509 residues: Circadian clock oscillator protein KaiC (509 aa).

2 consecutive KaiC domains span residues 1–243 and 257–509; these read MKDK…IIVF and IRIS…IEKN. ATP-binding residues include G45, T46, G47, K48, T49, S85, K220, L221, R222, T224, H226, D237, T286, G287, T288, G289, K290, and T291. T49 serves as a coordination point for Mg(2+). Residues T291 and E314 each contribute to the Mg(2+) site. ATP is bound at residue W327. S427 is modified (phosphoserine; by autocatalysis). At T428 the chain carries Phosphothreonine; by autocatalysis. Positions 447, 453, 454, 455, 457, 459, and 461 each coordinate ATP.

This sequence belongs to the KaiC family. In terms of assembly, homohexamer; hexamerization is dependent on ATP-binding. Component of the KaiBC complex. KaiC interacts with SasA, activating its autokinase function and leading to RpaA activation. It depends on Mg(2+) as a cofactor. In terms of processing, phosphorylated on serine and threonine residues by autocatalysis. Has a 4 step phosphorylation cycle; the autokinase acts first on Thr-428, then Ser-427. When Ser-427 is modified KaiC switches to an autophosphatase mode, acting first on phospho-Thr-428 then phospho-Ser-427.

It catalyses the reaction L-seryl-[protein] + ATP = O-phospho-L-seryl-[protein] + ADP + H(+). The catalysed reaction is L-threonyl-[protein] + ATP = O-phospho-L-threonyl-[protein] + ADP + H(+). The enzyme catalyses ATP + H2O = ADP + phosphate + H(+). Central component of the KaiBC oscillator complex, which constitutes the main circadian regulator in cyanobacteria. Its composition changes during the circadian cycle to control KaiC phosphorylation. Autophosphorylates and has a weak ATPase activity; ATPase activity defines the circadian period. The protein is Circadian clock oscillator protein KaiC of Prochlorococcus marinus subsp. pastoris (strain CCMP1986 / NIES-2087 / MED4).